The following is a 459-amino-acid chain: 1,3-beta-glucanosyltransferase gas2 (459 aa).

An N-terminal signal peptide occupies residues 1–19 (MVSFTKFTLQLLSASAAFA). Residues asparagine 34 and asparagine 68 are each glycosylated (N-linked (GlcNAc...) asparagine). Cysteine 69 and cysteine 98 are oxidised to a cystine. Tyrosine 87 provides a ligand contact to (1,3-beta-D-glucosyl)n. Asparagine 90, asparagine 104, and asparagine 146 each carry an N-linked (GlcNAc...) asparagine glycan. (1,3-beta-D-glucosyl)n is bound by residues asparagine 155 and glutamate 156. Glutamate 156 functions as the Proton donor in the catalytic mechanism. Asparagine 160 carries an N-linked (GlcNAc...) asparagine glycan. Residues aspartate 197 and arginine 202 each contribute to the (1,3-beta-D-glucosyl)n site. 2 cysteine pairs are disulfide-bonded: cysteine 211–cysteine 350 and cysteine 235–cysteine 266. Residues asparagine 212, asparagine 218, and asparagine 254 are each glycosylated (N-linked (GlcNAc...) asparagine). The Nucleophile role is filled by glutamate 263. The N-linked (GlcNAc...) asparagine glycan is linked to asparagine 284. A (1,3-beta-D-glucosyl)n-binding site is contributed by tyrosine 295. Residues asparagine 308, asparagine 334, asparagine 344, asparagine 354, and asparagine 370 are each glycosylated (N-linked (GlcNAc...) asparagine). Intrachain disulfides connect cysteine 374-cysteine 427, cysteine 383-cysteine 449, and cysteine 402-cysteine 409. N-linked (GlcNAc...) asparagine glycosylation occurs at asparagine 423.

This sequence belongs to the glycosyl hydrolase 72 family.

Its subcellular location is the endoplasmic reticulum lumen. It is found in the secreted. Functionally, splits internally a 1,3-beta-glucan molecule and transfers the newly generated reducing end (the donor) to the non-reducing end of another 1,3-beta-glucan molecule (the acceptor) forming a 1,3-beta linkage, resulting in the elongation of 1,3-beta-glucan chains in the cell wall. This is 1,3-beta-glucanosyltransferase gas2 (gas2) from Schizosaccharomyces pombe (strain 972 / ATCC 24843) (Fission yeast).